Consider the following 342-residue polypeptide: Strictosidine synthase (342 aa).

An N-terminal signal peptide occupies residues 1–20 (KLSDSQTMALFTVFLLFLSS). N-linked (GlcNAc...) asparagine glycosylation occurs at N89.

Belongs to the strictosidine synthase family. In terms of assembly, monomer.

The protein localises to the vacuole. It carries out the reaction 3alpha(S)-strictosidine + H2O = secologanin + tryptamine. It participates in alkaloid biosynthesis; 3alpha(S)-strictosidine biosynthesis; 3alpha(S)-strictosidine from secologanin and tryptamine: step 1/1. In terms of biological role, catalyzes the stereospecific condensation of tryptamine with secologanin to form strictosidine, the key intermediate of indole alkaloid biosynthesis. This chain is Strictosidine synthase (STR1), found in Rauvolfia mannii.